The chain runs to 125 residues: Scinderin (125 aa).

Phosphotyrosine is present on Tyr13. A 1,2-diacyl-sn-glycero-3-phospho-(1D-myo-inositol-4,5-bisphosphate) is bound by residues 23 to 30 (KGGLKYKA) and 49 to 57 (RLLHVKGRR). Residues 59-99 (VRATEVPLSWDSFNKGDCFIIDLGSEIYQWFGSSCNKYERL) form a Gelsolin-like 1 repeat.

The protein belongs to the villin/gelsolin family.

Its subcellular location is the cytoplasm. It localises to the cytoskeleton. It is found in the cell projection. The protein resides in the podosome. Functionally, ca(2+)-dependent actin filament-severing protein that has a regulatory function in exocytosis by affecting the organization of the microfilament network underneath the plasma membrane. In vitro, also has barbed end capping and nucleating activities in the presence of Ca(2+). Severing activity is inhibited by phosphatidylinositol 4,5-bis-phosphate (PIP2). Required for megakaryocyte differentiation, maturation, polyploidization and apoptosis with the release of platelet-like particles. Plays a role in osteoclastogenesis (OCG) and actin cytoskeletal organization in osteoclasts. Regulates chondrocyte proliferation and differentiation. Inhibits cell proliferation and tumorigenesis. Signaling is mediated by MAPK, p38 and JNK pathways. In Sus scrofa (Pig), this protein is Scinderin (SCIN).